The following is a 239-amino-acid chain: Uridylate kinase (239 aa).

13–16 (KLSG) lines the ATP pocket. Glycine 55 is a UMP binding site. ATP is bound by residues glycine 56 and arginine 60. Residues aspartate 75 and 136 to 143 (TGNPFFTT) each bind UMP. ATP-binding residues include threonine 163, asparagine 164, tyrosine 169, and aspartate 172.

This sequence belongs to the UMP kinase family. Homohexamer.

It is found in the cytoplasm. It carries out the reaction UMP + ATP = UDP + ADP. Its pathway is pyrimidine metabolism; CTP biosynthesis via de novo pathway; UDP from UMP (UMPK route): step 1/1. With respect to regulation, inhibited by UTP. Functionally, catalyzes the reversible phosphorylation of UMP to UDP. The sequence is that of Uridylate kinase from Neisseria gonorrhoeae (strain ATCC 700825 / FA 1090).